The chain runs to 163 residues: DNA endonuclease I-CreI (163 aa).

Residues glycine 19 and aspartate 20 each coordinate Mg(2+). 4 interaction with DNA regions span residues 26-38 (QIKP…FKHQ), 44-47 (QVTQ), 68-70 (RDR), and 138-143 (SKTRKT).

Belongs to the LAGLIDADG endonuclease family. In terms of assembly, homodimer. Requires Mg(2+) as cofactor. It depends on Mn(2+) as a cofactor. Co(2+) serves as cofactor. The cofactor is Ni(2+). Zn(2+) is required as a cofactor.

It is found in the plastid. The protein localises to the chloroplast. In terms of biological role, endonuclease involved in group I intron homing. Recognizes and cleaves a 19-24 bp palindromic DNA site. The polypeptide is DNA endonuclease I-CreI (Chlamydomonas reinhardtii (Chlamydomonas smithii)).